The sequence spans 223 residues: Nitrate reductase gamma chain (223 aa).

A helical transmembrane segment spans residues 2-27 (SGQILWGIMPYIVLTIFIGGHIYRYQ). Over 28-45 (HDQFGWTAKSSELLEKKK) the chain is Cytoplasmic. Residues 46–68 (LAAGSTLFHWGLLCVVGGHVMGI) traverse the membrane as a helical segment. Heme b is bound by residues histidine 54 and histidine 64. Residues 69 to 81 (LIPEGVYASLGIS) lie on the Extracellular side of the membrane. Residues 82–111 (EHMYHKMAIGAGLPAGIAACTGLVILTYRR) form a helical membrane-spanning segment. Topologically, residues 112 to 123 (LFDKRIRKTSSP) are cytoplasmic. The helical transmembrane segment at 124 to 147 (SDILTLLLLLFMMLSGVAATFLNI) threads the bilayer. Residues 148–180 (DSKGFDYRTTVGPWFREIVLFRPDASLMESVPL) are Extracellular-facing. Residues 181–196 (WFKFHIVIGYVVFILW) traverse the membrane as a helical segment. Histidine 185 and histidine 203 together coordinate heme b. Over 197-223 (PFTRLVHVFSLPLKYLTRSYVVYRKRS) the chain is Cytoplasmic.

Heme serves as cofactor.

It localises to the cell membrane. The catalysed reaction is nitrate + a quinol = a quinone + nitrite + H2O. In terms of biological role, the gamma chain is a membrane-embedded heme-iron unit resembling cytochrome b, which transfers electrons from quinones to the beta subunit. This Bacillus subtilis (strain 168) protein is Nitrate reductase gamma chain (narI).